Here is a 226-residue protein sequence, read N- to C-terminus: Urease accessory protein UreF (226 aa).

This sequence belongs to the UreF family. In terms of assembly, ureD, UreF and UreG form a complex that acts as a GTP-hydrolysis-dependent molecular chaperone, activating the urease apoprotein by helping to assemble the nickel containing metallocenter of UreC. The UreE protein probably delivers the nickel.

It is found in the cytoplasm. In terms of biological role, required for maturation of urease via the functional incorporation of the urease nickel metallocenter. This is Urease accessory protein UreF from Burkholderia lata (strain ATCC 17760 / DSM 23089 / LMG 22485 / NCIMB 9086 / R18194 / 383).